Consider the following 698-residue polypeptide: Protein artemis (698 aa).

A Phosphothreonine modification is found at Thr380. Residue Ser385 is modified to Phosphoserine. Disordered regions lie at residues 445 to 485, 505 to 595, and 620 to 669; these read ANFV…DPDV, LENL…DSIS, and NGVP…LPKP. Residues 449–461 show a composition bias toward acidic residues; it reads DCDESNSDSEGEL. Residues 508 to 521 show a composition bias toward polar residues; the sequence is LPSSIETGGSQSPK. Low complexity predominate over residues 538–551; it reads THISSQNSSQSTHI. Positions 552-583 are enriched in polar residues; sequence TDQGSQGWDSQCDTVLLSSQEKSGGDSTSLNK. The segment covering 641 to 655 has biased composition (low complexity); the sequence is TSLTSTQADSQSSSD. Ser650 is subject to Phosphoserine; by ATM.

Belongs to the DNA repair metallo-beta-lactamase (DRMBL) family. In terms of assembly, interacts with LIG4; the interaction is direct. Interacts with ATM. Interacts with BRCA1. Interacts with PRKDC. Interacts with TP53BP1. Also exhibits ATM- and phosphorylation-dependent interaction with the MRN complex, composed of MRE11, RAD50, and NBN. In terms of processing, phosphorylation on undefined residues by PRKDC may stimulate endonucleolytic activity on 5' and 3' hairpins and overhangs. PRKDC must remain present, even after phosphorylation, for efficient hairpin opening. Also phosphorylated by ATM in response to ionizing radiation (IR) and by ATR in response to ultraviolet (UV) radiation.

Its subcellular location is the nucleus. Required for V(D)J recombination, the process by which exons encoding the antigen-binding domains of immunoglobulins and T-cell receptor proteins are assembled from individual V, (D), and J gene segments. V(D)J recombination is initiated by the lymphoid specific RAG endonuclease complex, which generates site specific DNA double strand breaks (DSBs). These DSBs present two types of DNA end structures: hairpin sealed coding ends and phosphorylated blunt signal ends. These ends are independently repaired by the non homologous end joining (NHEJ) pathway to form coding and signal joints respectively. This protein exhibits single-strand specific 5'-3' exonuclease activity in isolation, and acquires endonucleolytic activity on 5' and 3' hairpins and overhangs when in a complex with PRKDC. The latter activity is required specifically for the resolution of closed hairpins prior to the formation of the coding joint. May also be required for the repair of complex DSBs induced by ionizing radiation, which require substantial end-processing prior to religation by NHEJ. This Rattus norvegicus (Rat) protein is Protein artemis (Dclre1c).